Reading from the N-terminus, the 427-residue chain is Peptidase B (427 aa).

Residues K195 and D200 each coordinate Mn(2+). K207 is a catalytic residue. The Mn(2+) site is built by D218, D277, and E279. Residue R281 is part of the active site.

The protein belongs to the peptidase M17 family. In terms of assembly, homohexamer. The cofactor is Mn(2+).

It is found in the cytoplasm. It catalyses the reaction Release of an N-terminal amino acid, Xaa, from a peptide or arylamide. Xaa is preferably Glu or Asp but may be other amino acids, including Leu, Met, His, Cys and Gln.. In terms of biological role, probably plays an important role in intracellular peptide degradation. This is Peptidase B from Salmonella agona (strain SL483).